The following is a 754-amino-acid chain: Aspartyl/asparaginyl beta-hydroxylase (754 aa).

The interval 1–48 is disordered; it reads MAPRKNAKGGGGNSSSSSSGSPTGCTSGGSSSPGARRETKQGGLKNGR. Residues 1-56 lie on the Cytoplasmic side of the membrane; the sequence is MAPRKNAKGGGGNSSSSSSGSPTGCTSGGSSSPGARRETKQGGLKNGRKGGLSGSS. Residues 14-34 show a composition bias toward low complexity; that stretch reads SSSSSSGSPTGCTSGGSSSPG. Residue Ser15 is modified to Phosphoserine. Residues 57–77 form a helical; Signal-anchor for type II membrane protein membrane-spanning segment; the sequence is FFTWFMVIALLGVWTSVAVVW. At 78–754 the chain is on the lumenal side; sequence FDLVDYEEVL…PHQRRSLPAI (677 aa). Asn96 carries an N-linked (GlcNAc...) asparagine glycan. Residues Asp109, Asp111, Asp113, Asp115, and Asp120 each coordinate Ca(2+). Disordered stretches follow at residues 176–197 and 247–326; these read VYSE…ELQP and EQEN…KKKK. 2 stretches are compositionally biased toward basic and acidic residues: residues 261-284 and 309-318; these read DAER…DHAV and TNKKADEPGK. TPR repeat units lie at residues 337–370, 378–411, 450–483, 485–517, and 521–553; these read IKAE…YPQS, AQCE…PDAP, TALK…TPND, FAKV…GDPG, and GRFY…GHFA. An N-linked (GlcNAc...) asparagine glycan is attached at Asn466. A 2-oxoglutarate-binding site is contributed by Trp621. Cys637 and Cys644 form a disulfide bridge. A 2-oxoglutarate-binding site is contributed by Ser664. Position 675 (His675) interacts with Fe cation. Position 684–686 (684–686) interacts with 2-oxoglutarate; the sequence is RMH. Asn702 carries an N-linked (GlcNAc...) asparagine glycan. A Fe cation-binding site is contributed by His721. Arg731 contacts 2-oxoglutarate.

It belongs to the aspartyl/asparaginyl beta-hydroxylase family. Monomer. Fe cation is required as a cofactor. In terms of processing, might be processed to the 56 kDa (AA 289-754) or 52 kDa (AA 311-754) forms in the lumen of the endoplasmic reticulum.

It localises to the endoplasmic reticulum membrane. The enzyme catalyses L-aspartyl-[protein] + 2-oxoglutarate + O2 = 3-hydroxy-L-aspartyl-[protein] + succinate + CO2. Specifically hydroxylates an Asp or Asn residue in certain epidermal growth factor-like (EGF) domains of a number of proteins. The protein is Aspartyl/asparaginyl beta-hydroxylase (ASPH) of Bos taurus (Bovine).